The primary structure comprises 333 residues: Methionine import ATP-binding protein MetN 1 (333 aa).

Positions 2 to 241 (ITFEGVEKVY…PETETAKSFV (240 aa)) constitute an ABC transporter domain. 38–45 (GFSGAGKS) contacts ATP.

Belongs to the ABC transporter superfamily. Methionine importer (TC 3.A.1.24) family. The complex is composed of two ATP-binding proteins (MetN), two transmembrane proteins (MetI) and a solute-binding protein (MetQ).

It is found in the cell membrane. The enzyme catalyses L-methionine(out) + ATP + H2O = L-methionine(in) + ADP + phosphate + H(+). The catalysed reaction is D-methionine(out) + ATP + H2O = D-methionine(in) + ADP + phosphate + H(+). In terms of biological role, part of the ABC transporter complex MetNIQ involved in methionine import. Responsible for energy coupling to the transport system. This chain is Methionine import ATP-binding protein MetN 1, found in Bacillus licheniformis (strain ATCC 14580 / DSM 13 / JCM 2505 / CCUG 7422 / NBRC 12200 / NCIMB 9375 / NCTC 10341 / NRRL NRS-1264 / Gibson 46).